We begin with the raw amino-acid sequence, 483 residues long: Spermatogenesis-defective protein 39 homolog (483 aa).

It belongs to the SPE39 family. Interacts with vps33b. In terms of tissue distribution, high levels detected in liver and small intestine of larvae at 5 days post-fertilization.

The protein localises to the cytoplasm. The protein resides in the cytoplasmic vesicle. Its subcellular location is the early endosome. It localises to the recycling endosome. It is found in the late endosome. In terms of biological role, proposed to be involved in endosomal maturation implicating in part vps33b. In epithelial cells, the vps33b:vipas39 complex may play a role in the apical rab11a-dependent recycling pathway and in the maintenance of the apical-basolateral polarity. May play a role in lysosomal trafficking, probably via association with the core HOPS complex in a discrete population of endosomes; the functions seems to be independent of vps33b. May play a role in vesicular trafficking during spermatogenesis. May be involved in direct or indirect transcriptional regulation of E-cadherin. In Danio rerio (Zebrafish), this protein is Spermatogenesis-defective protein 39 homolog (vipas39).